We begin with the raw amino-acid sequence, 332 residues long: Aerobic cobaltochelatase subunit CobS (332 aa).

Heterotrimer of CobN, CobS and CobT.

The protein localises to the cytoplasm. It catalyses the reaction hydrogenobyrinate a,c-diamide + Co(2+) + ATP + H2O = cob(II)yrinate a,c diamide + ADP + phosphate + 5 H(+). It functions in the pathway cofactor biosynthesis; adenosylcobalamin biosynthesis; cob(II)yrinate a,c-diamide from precorrin-2 (aerobic route): step 10/10. Its function is as follows. Catalyzes cobalt insertion in the corrin ring. This chain is Aerobic cobaltochelatase subunit CobS (cobS), found in Sinorhizobium sp.